We begin with the raw amino-acid sequence, 293 residues long: Ribosomal RNA small subunit methyltransferase A (293 aa).

S-adenosyl-L-methionine contacts are provided by Asn33, Val35, Gly60, Glu81, Asp111, and Asn130.

Belongs to the class I-like SAM-binding methyltransferase superfamily. rRNA adenine N(6)-methyltransferase family. RsmA subfamily.

Its subcellular location is the cytoplasm. The catalysed reaction is adenosine(1518)/adenosine(1519) in 16S rRNA + 4 S-adenosyl-L-methionine = N(6)-dimethyladenosine(1518)/N(6)-dimethyladenosine(1519) in 16S rRNA + 4 S-adenosyl-L-homocysteine + 4 H(+). Specifically dimethylates two adjacent adenosines (A1518 and A1519) in the loop of a conserved hairpin near the 3'-end of 16S rRNA in the 30S particle. May play a critical role in biogenesis of 30S subunits. The sequence is that of Ribosomal RNA small subunit methyltransferase A from Corynebacterium glutamicum (strain ATCC 13032 / DSM 20300 / JCM 1318 / BCRC 11384 / CCUG 27702 / LMG 3730 / NBRC 12168 / NCIMB 10025 / NRRL B-2784 / 534).